We begin with the raw amino-acid sequence, 130 residues long: Small ribosomal subunit protein uS9 (130 aa).

It belongs to the universal ribosomal protein uS9 family.

The protein is Small ribosomal subunit protein uS9 of Pseudomonas putida (strain ATCC 700007 / DSM 6899 / JCM 31910 / BCRC 17059 / LMG 24140 / F1).